Reading from the N-terminus, the 249-residue chain is Olfactory receptor 1571 (249 aa).

Residues 1-9 (LLMCNLCFA) form a helical membrane-spanning segment. The Extracellular portion of the chain corresponds to 10–40 (DICFTSASIPTNLVNIQTKNKVITYEGCISQ). A disulfide bridge connects residues cysteine 37 and cysteine 119. The helical transmembrane segment at 41 to 60 (VYFFILFGVLDNFLLAVMAY) threads the bilayer. The Cytoplasmic segment spans residues 61-82 (DRYVAICHPLHYTVIMNRRLCG). Residues 83-103 (LLVLGSWVTTALNSLLQSSMA) form a helical membrane-spanning segment. The Extracellular portion of the chain corresponds to 104 to 136 (LRLSFCTDLKIPHFVCELNQLVLLACNDTFPND). Asparagine 130 is a glycosylation site (N-linked (GlcNAc...) asparagine). A helical membrane pass occupies residues 137–158 (MVMYFAAVLLGGGPLAGILYSY). At 159-180 (SKIVSSIRAISSSQGKYKAFST) the chain is on the cytoplasmic side. A helical transmembrane segment spans residues 181 to 200 (CASHLSVVSLFYSTLLGVYL). Residues 201-210 (SSSFTQNSHS) are Extracellular-facing. Residues 211 to 232 (TARASVMYSVVTPMLNPFIYSL) form a helical membrane-spanning segment. Residues 233–249 (RNKDLMGALRRLFRRKP) are Cytoplasmic-facing.

The protein belongs to the G-protein coupled receptor 1 family. In terms of tissue distribution, tongue specific.

It localises to the cell membrane. Possible taste receptor. This is Olfactory receptor 1571 (Olr1571) from Rattus norvegicus (Rat).